The following is a 130-amino-acid chain: ATP synthase epsilon chain (130 aa).

It belongs to the ATPase epsilon chain family. F-type ATPases have 2 components, CF(1) - the catalytic core - and CF(0) - the membrane proton channel. CF(1) has five subunits: alpha(3), beta(3), gamma(1), delta(1), epsilon(1). CF(0) has three main subunits: a, b and c.

The protein resides in the cell membrane. In terms of biological role, produces ATP from ADP in the presence of a proton gradient across the membrane. The sequence is that of ATP synthase epsilon chain (atpC) from Mycoplasmoides gallisepticum (strain R(low / passage 15 / clone 2)) (Mycoplasma gallisepticum).